Reading from the N-terminus, the 114-residue chain is MAEITSAKAMARTVRVSPRKTRLVLDLIRGKNVADAIAILKFTPNKAARIVEKTLNSAIANAENNFGLEKANLVVSETFANEGPTMKRFRPRAKGSASPINKRTTHVTVVVSEK.

Belongs to the universal ribosomal protein uL22 family. As to quaternary structure, part of the 50S ribosomal subunit.

This protein binds specifically to 23S rRNA; its binding is stimulated by other ribosomal proteins, e.g. L4, L17, and L20. It is important during the early stages of 50S assembly. It makes multiple contacts with different domains of the 23S rRNA in the assembled 50S subunit and ribosome. In terms of biological role, the globular domain of the protein is located near the polypeptide exit tunnel on the outside of the subunit, while an extended beta-hairpin is found that lines the wall of the exit tunnel in the center of the 70S ribosome. This is Large ribosomal subunit protein uL22 from Streptococcus thermophilus (strain CNRZ 1066).